The primary structure comprises 207 residues: Uracil phosphoribosyltransferase (207 aa).

Residues Arg-77, Arg-102, and 129–137 (DPMLATGGS) contribute to the 5-phospho-alpha-D-ribose 1-diphosphate site. Uracil is bound by residues Ile-192 and 197–199 (GDA). 5-phospho-alpha-D-ribose 1-diphosphate is bound at residue Asp-198.

Belongs to the UPRTase family. The cofactor is Mg(2+).

The catalysed reaction is UMP + diphosphate = 5-phospho-alpha-D-ribose 1-diphosphate + uracil. It participates in pyrimidine metabolism; UMP biosynthesis via salvage pathway; UMP from uracil: step 1/1. Its activity is regulated as follows. Allosterically activated by GTP. Its function is as follows. Catalyzes the conversion of uracil and 5-phospho-alpha-D-ribose 1-diphosphate (PRPP) to UMP and diphosphate. The sequence is that of Uracil phosphoribosyltransferase from Ureaplasma urealyticum serovar 10 (strain ATCC 33699 / Western).